The sequence spans 3004 residues: Guanylate cyclase beta (3004 aa).

The Cytoplasmic segment spans residues 1 to 66; the sequence is MKETDKIKSE…FSLYNFIRRL (66 aa). A helical transmembrane segment spans residues 67–87; that stretch reads ISLDAVIVYTLFMTVYIFSEI. At 88–94 the chain is on the extracellular side; the sequence is SQGITKK. The helical transmembrane segment at 95–115 threads the bilayer; sequence YLFVDTAISLFLNIGILVVIE. At 116–300 the chain is on the cytoplasmic side; it reads SLFELKLLKD…TFCIKMNNVV (185 aa). The helical transmembrane segment at 301–321 threads the bilayer; the sequence is YYLIFMYILFVLLSIIIKAIF. The Extracellular portion of the chain corresponds to 322–334; sequence YRKGKLLENSNDT. N-linked (GlcNAc...) asparagine glycosylation is present at Asn332. The chain crosses the membrane as a helical span at residues 335-355; sequence FFTVLEDFIGLYILVLPVMLY. Over 356 to 991 the chain is Cytoplasmic; the sequence is SEKSLIYIIQ…GRLNRFSLCR (636 aa). A helical transmembrane segment spans residues 992–1012; it reads AFLWIIYLKVMIGSFYFFHNF. Over 1013–1022 the chain is Extracellular; sequence DNFFSGSSIS. The chain crosses the membrane as a helical span at residues 1023 to 1043; sequence SILYSQTAFAIFHYSLIVAFA. The Cytoplasmic portion of the chain corresponds to 1044–1072; sequence SYEIDIPYKFIRNFPYIYQLARRKYFLNN. The helical transmembrane segment at 1073-1093 threads the bilayer; the sequence is TIIFLNIVESIFSSFISYYIL. Residues 1094-1105 are Extracellular-facing; that stretch reads RGNLFNLITHRK. Residues 1106–1126 form a helical membrane-spanning segment; it reads FTFHIFVLNFFLISEKILLFS. The Cytoplasmic portion of the chain corresponds to 1127–1130; it reads KTWH. Residues 1131 to 1151 form a helical membrane-spanning segment; sequence IFFFIMTIIIVSILFIYINIY. Residues 1152–1171 lie on the Extracellular side of the membrane; sequence TLVDCLITGKCEFSLFDPED. Residues 1172 to 1192 form a helical membrane-spanning segment; sequence SYFWISLLPILYINFIIDKFM. The Cytoplasmic segment spans residues 1193 to 1297; it reads KFVKNKIYPD…YEKRNKLKLR (105 aa). The chain crosses the membrane as a helical span at residues 1298–1318; it reads IIILLLFIIFLITFTIQIIIS. Topologically, residues 1319-1327 are extracellular; it reads KFIEKKLHS. The chain crosses the membrane as a helical span at residues 1328 to 1348; the sequence is LSYLTVIYYIVAVLYLIKILI. Topologically, residues 1349-1353 are cytoplasmic; sequence RNKTN. A helical membrane pass occupies residues 1354–1374; sequence YTYFYIIGKLLLVIGYLLEIS. Residues 1375–1394 lie on the Extracellular side of the membrane; that stretch reads ENSVNNIINMLVTYSFTVCY. Residues 1395–1415 form a helical membrane-spanning segment; sequence IFFISFKILEGLVMCIIILSI. Residues 1416 to 1457 lie on the Cytoplasmic side of the membrane; the sequence is AIWVYYHKNNNLNAMCTDFCDNPYTSLDNLEYINISCICKQQ. Residues 1458-1478 traverse the membrane as a helical segment; sequence IFTFLICTLSFTLICLFMKYY. The Extracellular portion of the chain corresponds to 1479-1500; that stretch reads EIYYLKKKFLTRYKQKVNLGKQ. A helical transmembrane segment spans residues 1501-1521; it reads IEILHTMLPSFLVEYLLVSDP. Over 1522-2563 the chain is Cytoplasmic; sequence KADGIMVGKN…EIINIDLTKK (1042 aa). The 156-residue stretch at 1541-1696 folds into the Guanylate cyclase 1 domain; sequence SVIFCDIDDF…DTVNTASRMK (156 aa). Residues 2463–2476 are compositionally biased toward polar residues; it reads TMSNSKSGQTNITT. A disordered region spans residues 2463 to 2491; sequence TMSNSKSGQTNITTDNKKSQIKKNGDVNK. Basic and acidic residues predominate over residues 2477-2488; sequence DNKKSQIKKNGD. The helical transmembrane segment at 2564-2584 threads the bilayer; sequence LIIIFVISELILSLCNVIELS. Topologically, residues 2585-2594 are extracellular; sequence YYENKETPND. The chain crosses the membrane as a helical span at residues 2595 to 2615; it reads FIVIIWLIRSIYLFTITFIWL. The Cytoplasmic segment spans residues 2616–2634; the sequence is LLKTKLKEYKDNSSKMMWT. Residues 2635 to 2655 traverse the membrane as a helical segment; sequence TFILNIFLSSWGIIMIDLACI. Residues 2656–2667 are Extracellular-facing; that stretch reads HYSNLVGNSRER. A helical transmembrane segment spans residues 2668 to 2688; sequence SIFFMKDATELIISMQLIFVK. Residues 2689 to 2695 lie on the Cytoplasmic side of the membrane; sequence NMLFKHK. A helical membrane pass occupies residues 2696 to 2716; sequence FFFFVFFFVFLMYSFFKLFVI. Residues 2717-2722 lie on the Extracellular side of the membrane; that stretch reads HVCELR. The helical transmembrane segment at 2723-2743 threads the bilayer; sequence ICCSILLILSINILYFWYSEY. The Cytoplasmic portion of the chain corresponds to 2744–3004; sequence LDRTQYIIKR…KLREQNKVKG (261 aa). Residues 2793–2927 enclose the Guanylate cyclase 2 domain; it reads AFLFADIVGF…LDVLIANHIE (135 aa). The Mg(2+) site is built by Asp2798, Ile2799, and Asp2842.

In the N-terminal section; belongs to the cation transport ATPase (P-type) (TC 3.A.3) family. Type IV subfamily. This sequence in the C-terminal section; belongs to the adenylyl cyclase class-4/guanylyl cyclase family. The cofactor is Mg(2+). Mn(2+) serves as cofactor.

The protein resides in the membrane. The catalysed reaction is GTP = 3',5'-cyclic GMP + diphosphate. In terms of biological role, catalyzes the synthesis of the second messenger cGMP from GTP. Probably by regulating cGMP production, required for ookinete gliding motility, which is necessary for the ookinete to traverse the midgut epithelium of the mosquito. This Plasmodium berghei (strain Anka) protein is Guanylate cyclase beta.